We begin with the raw amino-acid sequence, 239 residues long: Ubiquinone biosynthesis O-methyltransferase (239 aa).

Arg45, Gly64, Asp85, and Met129 together coordinate S-adenosyl-L-methionine.

It belongs to the methyltransferase superfamily. UbiG/COQ3 family.

It catalyses the reaction a 3-demethylubiquinol + S-adenosyl-L-methionine = a ubiquinol + S-adenosyl-L-homocysteine + H(+). It carries out the reaction a 3-(all-trans-polyprenyl)benzene-1,2-diol + S-adenosyl-L-methionine = a 2-methoxy-6-(all-trans-polyprenyl)phenol + S-adenosyl-L-homocysteine + H(+). It functions in the pathway cofactor biosynthesis; ubiquinone biosynthesis. O-methyltransferase that catalyzes the 2 O-methylation steps in the ubiquinone biosynthetic pathway. The sequence is that of Ubiquinone biosynthesis O-methyltransferase from Nitrosospira multiformis (strain ATCC 25196 / NCIMB 11849 / C 71).